The chain runs to 456 residues: Putative F-box/FBD/LRR-repeat protein At1g66300 (456 aa).

The segment at 1–23 is disordered; the sequence is MDEDGEKRVRTKRLCSPESSDKK. Positions 28–74 constitute an F-box domain; it reads VDWVRDLPESLICHVLLNLSTKDVIKNCVLSTKWRYLWRYVPGLDLD. 4 LRR repeats span residues 136–163, 185–210, 234–260, and 347–372; these read HLDLEWGALEIPPIVYVCKSLVSLKLCG, VKFANDLALEMLISGCLVLKSLTLCR, PNTMGPEYEELIVEIDTPKLQDLTLSH, and FYEDRWEMLPFFLESCPNLKSLVVGS. In terms of domain architecture, FBD spans 377-429; that stretch reads MERTSIISGHRCLLSSLEYVEIETPLTGEVFEMKLVSYLLENSPILKKLTIHL.

In Arabidopsis thaliana (Mouse-ear cress), this protein is Putative F-box/FBD/LRR-repeat protein At1g66300.